We begin with the raw amino-acid sequence, 269 residues long: Thymidylate synthase (269 aa).

Residues Arg21 and 125-126 (RR) contribute to the dUMP site. Residue Cys145 is the Nucleophile of the active site. Residues 171–174 (RSGD), Asn182, and 212–214 (HVY) contribute to the dUMP site. Asp174 is a (6R)-5,10-methylene-5,6,7,8-tetrahydrofolate binding site. Ala268 contacts (6R)-5,10-methylene-5,6,7,8-tetrahydrofolate.

This sequence belongs to the thymidylate synthase family. Bacterial-type ThyA subfamily. In terms of assembly, homodimer.

The protein resides in the cytoplasm. The catalysed reaction is dUMP + (6R)-5,10-methylene-5,6,7,8-tetrahydrofolate = 7,8-dihydrofolate + dTMP. It functions in the pathway pyrimidine metabolism; dTTP biosynthesis. Its function is as follows. Catalyzes the reductive methylation of 2'-deoxyuridine-5'-monophosphate (dUMP) to 2'-deoxythymidine-5'-monophosphate (dTMP) while utilizing 5,10-methylenetetrahydrofolate (mTHF) as the methyl donor and reductant in the reaction, yielding dihydrofolate (DHF) as a by-product. This enzymatic reaction provides an intracellular de novo source of dTMP, an essential precursor for DNA biosynthesis. This chain is Thymidylate synthase, found in Cutibacterium acnes (strain DSM 16379 / KPA171202) (Propionibacterium acnes).